A 360-amino-acid chain; its full sequence is DNA polymerase IV (360 aa).

One can recognise a UmuC domain in the interval 6–187 (IIHVDMDAFY…LKIGDLHGVG (182 aa)). The Mg(2+) site is built by aspartate 10 and aspartate 105. Glutamate 106 is a catalytic residue.

It belongs to the DNA polymerase type-Y family. In terms of assembly, monomer. Mg(2+) serves as cofactor.

It localises to the cytoplasm. The enzyme catalyses DNA(n) + a 2'-deoxyribonucleoside 5'-triphosphate = DNA(n+1) + diphosphate. Poorly processive, error-prone DNA polymerase involved in untargeted mutagenesis. Copies undamaged DNA at stalled replication forks, which arise in vivo from mismatched or misaligned primer ends. These misaligned primers can be extended by PolIV. Exhibits no 3'-5' exonuclease (proofreading) activity. May be involved in translesional synthesis, in conjunction with the beta clamp from PolIII. This Exiguobacterium sibiricum (strain DSM 17290 / CCUG 55495 / CIP 109462 / JCM 13490 / 255-15) protein is DNA polymerase IV.